Consider the following 111-residue polypeptide: Large ribosomal subunit protein uL22 (111 aa).

This sequence belongs to the universal ribosomal protein uL22 family. In terms of assembly, part of the 50S ribosomal subunit.

Functionally, this protein binds specifically to 23S rRNA; its binding is stimulated by other ribosomal proteins, e.g. L4, L17, and L20. It is important during the early stages of 50S assembly. It makes multiple contacts with different domains of the 23S rRNA in the assembled 50S subunit and ribosome. In terms of biological role, the globular domain of the protein is located near the polypeptide exit tunnel on the outside of the subunit, while an extended beta-hairpin is found that lines the wall of the exit tunnel in the center of the 70S ribosome. The chain is Large ribosomal subunit protein uL22 from Mycoplasma capricolum subsp. capricolum (strain California kid / ATCC 27343 / NCTC 10154).